We begin with the raw amino-acid sequence, 156 residues long: CKLF-like MARVEL transmembrane domain-containing protein 5 (156 aa).

The region spanning F29–L146 is the MARVEL domain. The next 4 membrane-spanning stretches (helical) occupy residues G35–S55, I56–L76, L93–V113, and A119–F139.

Belongs to the chemokine-like factor family.

It localises to the membrane. This is CKLF-like MARVEL transmembrane domain-containing protein 5 (Cmtm5) from Mus musculus (Mouse).